The following is a 303-amino-acid chain: Probable cell division protein WhiA (303 aa).

A DNA-binding region (H-T-H motif) is located at residues 272–303 (SIQQLADSLSTPLTKSGVNHRLRKINKIADEL).

Belongs to the WhiA family.

Involved in cell division and chromosome segregation. The polypeptide is Probable cell division protein WhiA (Streptococcus pneumoniae serotype 2 (strain D39 / NCTC 7466)).